Consider the following 336-residue polypeptide: uncharacterized protein (336 aa).

2 disordered regions span residues 29-93 and 116-147; these read GGVS…HSGA and LQER…GVTG. Polar residues-rich tracts occupy residues 70 to 82 and 125 to 141; these read SGGS…TSTA and PWRT…SQPH.

This is an uncharacterized protein from Bos taurus (Bovine).